Consider the following 154-residue polypeptide: Deoxyuridine 5'-triphosphate nucleotidohydrolase (154 aa).

Residues 64–66 (RSG), N77, 81–83 (TID), and K91 contribute to the substrate site.

The protein belongs to the dUTPase family. In terms of assembly, homotrimer. Mg(2+) is required as a cofactor.

The enzyme catalyses dUTP + H2O = dUMP + diphosphate + H(+). It functions in the pathway pyrimidine metabolism; dUMP biosynthesis; dUMP from dCTP (dUTP route): step 2/2. Functionally, this enzyme is involved in nucleotide metabolism: it produces dUMP, the immediate precursor of thymidine nucleotides and it decreases the intracellular concentration of dUTP so that uracil cannot be incorporated into DNA. This chain is Deoxyuridine 5'-triphosphate nucleotidohydrolase, found in Mycobacterium marinum (strain ATCC BAA-535 / M).